The primary structure comprises 341 residues: Glyceraldehyde-3-phosphate dehydrogenase 3.1 (341 aa).

NAD(+) is bound by residues 13 to 14 (RI), Asp-35, and Arg-85. D-glyceraldehyde 3-phosphate-binding positions include 157 to 159 (SCT), Thr-188, 217 to 218 (TG), and Arg-240. Cys-158 acts as the Nucleophile in catalysis. Asn-322 serves as a coordination point for NAD(+).

This sequence belongs to the glyceraldehyde-3-phosphate dehydrogenase family. Homotetramer.

The protein localises to the cytoplasm. The enzyme catalyses D-glyceraldehyde 3-phosphate + phosphate + NAD(+) = (2R)-3-phospho-glyceroyl phosphate + NADH + H(+). Its pathway is carbohydrate degradation; glycolysis; pyruvate from D-glyceraldehyde 3-phosphate: step 1/5. This Caenorhabditis briggsae protein is Glyceraldehyde-3-phosphate dehydrogenase 3.1.